A 273-amino-acid polypeptide reads, in one-letter code: Putative phosphoenolpyruvate synthase regulatory protein (273 aa).

153 to 160 (GVSRSGKT) is a binding site for ADP.

It belongs to the pyruvate, phosphate/water dikinase regulatory protein family. PSRP subfamily.

It catalyses the reaction [pyruvate, water dikinase] + ADP = [pyruvate, water dikinase]-phosphate + AMP + H(+). The catalysed reaction is [pyruvate, water dikinase]-phosphate + phosphate + H(+) = [pyruvate, water dikinase] + diphosphate. Bifunctional serine/threonine kinase and phosphorylase involved in the regulation of the phosphoenolpyruvate synthase (PEPS) by catalyzing its phosphorylation/dephosphorylation. This is Putative phosphoenolpyruvate synthase regulatory protein from Variovorax paradoxus (strain S110).